The primary structure comprises 206 residues: Ion-translocating oxidoreductase complex subunit G (206 aa).

A helical membrane pass occupies residues 9-29 (GITLALFAAGSTGLTAAINQM). Threonine 174 is modified (FMN phosphoryl threonine).

This sequence belongs to the RnfG family. The complex is composed of six subunits: RsxA, RsxB, RsxC, RsxD, RsxE and RsxG. It depends on FMN as a cofactor.

It is found in the cell inner membrane. Its function is as follows. Part of a membrane-bound complex that couples electron transfer with translocation of ions across the membrane. Required to maintain the reduced state of SoxR. Probably transfers electron from NAD(P)H to SoxR. The polypeptide is Ion-translocating oxidoreductase complex subunit G (Escherichia coli (strain K12)).